A 214-amino-acid chain; its full sequence is Outer-membrane lipoprotein LolB (214 aa).

An N-terminal signal peptide occupies residues 1 to 25 (MNNLKRFTKSIFSCIALSGLLFLGG). Cysteine 26 is lipidated: N-palmitoyl cysteine. A lipid anchor (S-diacylglycerol cysteine) is attached at cysteine 26.

Belongs to the LolB family. In terms of assembly, monomer.

It localises to the cell outer membrane. Functionally, plays a critical role in the incorporation of lipoproteins in the outer membrane after they are released by the LolA protein. This chain is Outer-membrane lipoprotein LolB, found in Shewanella oneidensis (strain ATCC 700550 / JCM 31522 / CIP 106686 / LMG 19005 / NCIMB 14063 / MR-1).